Reading from the N-terminus, the 231-residue chain is Large ribosomal subunit protein uL1 (231 aa).

This sequence belongs to the universal ribosomal protein uL1 family. In terms of assembly, part of the 50S ribosomal subunit.

Its function is as follows. Binds directly to 23S rRNA. The L1 stalk is quite mobile in the ribosome, and is involved in E site tRNA release. Protein L1 is also a translational repressor protein, it controls the translation of the L11 operon by binding to its mRNA. The sequence is that of Large ribosomal subunit protein uL1 from Nitrosomonas eutropha (strain DSM 101675 / C91 / Nm57).